A 218-amino-acid chain; its full sequence is Pyridoxine/pyridoxamine 5'-phosphate oxidase (218 aa).

Residues 11 to 14 (RVEY) and lysine 75 each bind substrate. Residues 70–75 (RTVLCK), 85–86 (YT), lysine 92, and glutamine 114 each bind FMN. Residues tyrosine 132, arginine 136, and serine 140 each contribute to the substrate site. Residues 149-150 (QS) and tryptophan 195 contribute to the FMN site. Residue 201–203 (RVH) participates in substrate binding. Position 205 (arginine 205) interacts with FMN.

This sequence belongs to the pyridoxamine 5'-phosphate oxidase family. In terms of assembly, homodimer. It depends on FMN as a cofactor.

It catalyses the reaction pyridoxamine 5'-phosphate + O2 + H2O = pyridoxal 5'-phosphate + H2O2 + NH4(+). The enzyme catalyses pyridoxine 5'-phosphate + O2 = pyridoxal 5'-phosphate + H2O2. The protein operates within cofactor metabolism; pyridoxal 5'-phosphate salvage; pyridoxal 5'-phosphate from pyridoxamine 5'-phosphate: step 1/1. It functions in the pathway cofactor metabolism; pyridoxal 5'-phosphate salvage; pyridoxal 5'-phosphate from pyridoxine 5'-phosphate: step 1/1. Its function is as follows. Catalyzes the oxidation of either pyridoxine 5'-phosphate (PNP) or pyridoxamine 5'-phosphate (PMP) into pyridoxal 5'-phosphate (PLP). In Mycolicibacterium gilvum (strain PYR-GCK) (Mycobacterium gilvum (strain PYR-GCK)), this protein is Pyridoxine/pyridoxamine 5'-phosphate oxidase.